The primary structure comprises 487 residues: Meiotic recombination protein SPO11-4 (487 aa).

The tract at residues 1–56 is disordered; sequence MDDSTDDDSYHPRKHYAYDRQVSSSRWRTSREYIRGPGPETHTTESAQDGQDPPAG. The region spanning 119-252 is the Topo IIA-type catalytic domain; that stretch reads KSRVEARKTL…LGIIAAEKGI (134 aa). Residue tyrosine 213 is the O-(5'-phospho-DNA)-tyrosine intermediate of the active site. Residues glutamate 301 and aspartate 353 each contribute to the Mg(2+) site.

The protein belongs to the TOP6A family. Homodimer. Interacts with TOP6B. It depends on Mg(2+) as a cofactor.

It localises to the nucleus. It carries out the reaction ATP-dependent breakage, passage and rejoining of double-stranded DNA.. Its function is as follows. Required for meiotic recombination. Mediates DNA cleavage that forms the double-strand breaks (DSB) that initiate meiotic recombination. Possesses double-stranded DNA cleavage activity in vitro. This Oryza sativa subsp. japonica (Rice) protein is Meiotic recombination protein SPO11-4 (SPO11-4).